Here is a 1190-residue protein sequence, read N- to C-terminus: Ras-specific guanine nucleotide-releasing factor 2 (1190 aa).

The PH 1 domain occupies 22–133 (EGTKRGFLSK…WMEAIHQASY (112 aa)). Residues 155–193 (ETEKIAANQLRHQLEDQDTEIERLKSEIVALNKTKERMR) are a coiled coil. An IQ domain is found at 205 to 234 (DIKKIKKVQSFMRGWLCRRKWKTIVQDYIC). The 187-residue stretch at 243 to 429 (KRNQIVFTMV…EELSRVMHDE (187 aa)) folds into the DH domain. Positions 470–588 (PSVERGKLSK…WMSDISQCVD (119 aa)) constitute a PH 2 domain. The N-terminal Ras-GEF domain maps to 635–755 (KVPQIRYASV…LTSSLNSRIG (121 aa)). The tract at residues 713–744 (VDGKSPRLCRKFSSPPPLAVSRTSSPVRARKL) is disordered. Serine 725 and serine 726 each carry phosphoserine. Serine 736 carries the phosphoserine; by CDK5 modification. Positions 743–751 (KLSLTSSLN) are regulates proteasomal degradation. Phosphoserine occurs at positions 745 and 749. The tract at residues 757-826 (LDLTTSSSSS…QPGGQVADST (70 aa)) is disordered. A compositionally biased stretch (low complexity) spans 760-776 (TTSSSSSSPTTTVHSPA). A compositionally biased stretch (polar residues) spans 798-810 (TDMSPCRSPSTTP). Serine 801, serine 805, and serine 925 each carry phosphoserine. The region spanning 955-1187 (SAMELAEQIT…YELSLKIEPR (233 aa)) is the Ras-GEF domain. The tract at residues 1052 to 1081 (ALNRSAIYRLKKTWTKVSKQTKALMDKLQK) is responsible of the affinity for farnesylated versus geranylgeranylated Ras.

In terms of assembly, homooligomer and heterooligomer with RASGRF1. Interacts with Ras and RAC1. Interacts in a calcium-dependent manner with calmodulin. Interacts with CDK5R1 and probably EPB49. Interacts with the AMPA receptor through GRIA1. Interacts with microtubules. Post-translationally, phosphorylated by CDK5; down-regulates RASGRF2-mediated RAC1 activation. In terms of processing, ubiquitinated upon interaction with Ras. Ubiquitination leads to degradation through the 26S proteasome. In terms of tissue distribution, widely expressed. Detected in brain, lung, spleen, pancreas, kidney, liver, heart, mammary gland and skeletal muscle.

The protein localises to the cytoplasm. It is found in the cell membrane. Its subcellular location is the endoplasmic reticulum membrane. Functions as a calcium-regulated nucleotide exchange factor activating both Ras and RAC1 through the exchange of bound GDP for GTP. Preferentially activates HRAS in vivo compared to RRAS based on their different types of prenylation. Functions in synaptic plasticity by contributing to the induction of long term potentiation. The sequence is that of Ras-specific guanine nucleotide-releasing factor 2 (Rasgrf2) from Rattus norvegicus (Rat).